A 205-amino-acid polypeptide reads, in one-letter code: MRPLTPRQSEILELIKDNLHATGMPPTRAEIAHKLGFRSANSAEEHLKALARKGVIEILPGMSRGIRLVGDDYDIADGLPLIGQVAAGEPLLAEQHVEGHYKIDESLFHPAASFLLKVNGMSMRDIGILDGDLLAVHKTEQARNGQIVVARVEDEVTVKRFEQRGKTILLHPENEDFSTITVNLAEQVFAIEGLAVGVIRNGATL.

A DNA-binding region (H-T-H motif) is located at residues 28 to 48; the sequence is RAEIAHKLGFRSANSAEEHLK. Active-site for autocatalytic cleavage activity residues include Ser-122 and Lys-159.

It belongs to the peptidase S24 family. As to quaternary structure, homodimer.

The enzyme catalyses Hydrolysis of Ala-|-Gly bond in repressor LexA.. Represses a number of genes involved in the response to DNA damage (SOS response), including recA and lexA. In the presence of single-stranded DNA, RecA interacts with LexA causing an autocatalytic cleavage which disrupts the DNA-binding part of LexA, leading to derepression of the SOS regulon and eventually DNA repair. This chain is LexA repressor, found in Idiomarina loihiensis (strain ATCC BAA-735 / DSM 15497 / L2-TR).